Reading from the N-terminus, the 313-residue chain is Ribosomal RNA small subunit methyltransferase H (313 aa).

S-adenosyl-L-methionine contacts are provided by residues G35 to H37, D55, F79, D101, and Q108.

It belongs to the methyltransferase superfamily. RsmH family.

It is found in the cytoplasm. It catalyses the reaction cytidine(1402) in 16S rRNA + S-adenosyl-L-methionine = N(4)-methylcytidine(1402) in 16S rRNA + S-adenosyl-L-homocysteine + H(+). Specifically methylates the N4 position of cytidine in position 1402 (C1402) of 16S rRNA. This is Ribosomal RNA small subunit methyltransferase H from Shigella dysenteriae serotype 1 (strain Sd197).